The following is a 258-amino-acid chain: Snake venom serine protease PTLE1 (258 aa).

The first 18 residues, 1 to 18 (MVLIRVLANLLILQLSYA), serve as a signal peptide directing secretion. Positions 19-24 (QKSSEL) are excised as a propeptide. A Peptidase S1 domain is found at 25–249 (VIGGDECNIN…YTDWIENIIA (225 aa)). Disulfide bonds link cysteine 31/cysteine 163, cysteine 50/cysteine 66, cysteine 98/cysteine 256, cysteine 142/cysteine 210, cysteine 174/cysteine 189, and cysteine 200/cysteine 225. Asparagine 44 carries an N-linked (GlcNAc...) asparagine glycan. Histidine 65 acts as the Charge relay system in catalysis. Asparagine 79 and asparagine 103 each carry an N-linked (GlcNAc...) asparagine glycan. Aspartate 110 (charge relay system) is an active-site residue. Asparagine 121 carries an N-linked (GlcNAc...) asparagine glycan. Residue serine 204 is the Charge relay system of the active site.

Belongs to the peptidase S1 family. Snake venom subfamily. Monomer. In terms of tissue distribution, expressed by the venom gland.

The protein localises to the secreted. Its function is as follows. Snake venom serine protease that may act in the hemostasis system of the prey. This is Snake venom serine protease PTLE1 from Gloydius halys (Chinese water mocassin).